The chain runs to 116 residues: Protein RALF-like 33 (116 aa).

Positions 1-23 (MRGLSTKPVAIIIAILTVHFLFA) are cleaved as a signal peptide. Residues 24–67 (AVTSQSSGDFVPIESKCNGTIAECSLSTAEEEFEMDSEINRRIL) constitute a propeptide, removed in mature form. An N-linked (GlcNAc...) asparagine glycan is attached at asparagine 41. 2 cysteine pairs are disulfide-bonded: cysteine 85/cysteine 95 and cysteine 108/cysteine 114.

This sequence belongs to the plant rapid alkalinization factor (RALF) family. Proteolytically cleaved, probably by S1P, a subtilisin-like serine protease (subtilase). Expressed in roots, stems, leaves and plants.

The protein localises to the secreted. Cell signaling peptide that may regulate plant stress, growth, and development. Mediates a rapid alkalinization of extracellular space by mediating a transient increase in the cytoplasmic Ca(2+) concentration leading to a calcium-dependent signaling events through a cell surface receptor and a concomitant activation of some intracellular mitogen-activated protein kinases. The polypeptide is Protein RALF-like 33 (RALFL33) (Arabidopsis thaliana (Mouse-ear cress)).